Here is a 207-residue protein sequence, read N- to C-terminus: Ras-related protein Rab-8A (207 aa).

Residues serine 17, glycine 18, valine 19, glycine 20, lysine 21, threonine 22, cysteine 23, serine 39, and threonine 40 each coordinate GTP. Threonine 22 provides a ligand contact to Mg(2+). 2 consecutive short sequence motifs (switch) follow at residues 31 to 45 (DAFNATFISTIGIDF) and 63 to 80 (DTAGQERFRTITTAYYRG). The Mg(2+) site is built by threonine 40 and aspartate 63. Glycine 66, asparagine 121, lysine 122, aspartate 124, alanine 152, and lysine 153 together coordinate GTP. Position 204 is a cysteine methyl ester (cysteine 204). Residue cysteine 204 is the site of S-geranylgeranyl cysteine attachment. Positions 205-207 (VLL) are cleaved as a propeptide — removed in mature form.

This sequence belongs to the small GTPase superfamily. Rab family. It depends on Mg(2+) as a cofactor.

It localises to the cell membrane. It is found in the golgi apparatus. The protein localises to the endosome membrane. The protein resides in the recycling endosome membrane. Its subcellular location is the cell projection. It localises to the cilium. It is found in the cytoplasmic vesicle. The protein localises to the phagosome membrane. The protein resides in the cytoplasm. Its subcellular location is the cytoskeleton. It localises to the microtubule organizing center. It is found in the centrosome. The protein localises to the centriole. The protein resides in the cilium basal body. Its subcellular location is the midbody. The catalysed reaction is GTP + H2O = GDP + phosphate + H(+). With respect to regulation, regulated by guanine nucleotide exchange factors (GEFs) which promote the exchange of bound GDP for free GTP, GTPase activating proteins (GAPs) which increase the GTP hydrolysis activity, and GDP dissociation inhibitors (GDIs) which inhibit the dissociation of the nucleotide from the GTPase. Activated in response to insulin. The small GTPases Rab are key regulators of intracellular membrane trafficking, from the formation of transport vesicles to their fusion with membranes. Rabs cycle between an inactive GDP-bound form and an active GTP-bound form that is able to recruit to membranes different sets of downstream effectors directly responsible for vesicle formation, movement, tethering and fusion. RAB8A is involved in polarized vesicular trafficking and neurotransmitter release. Together with RAB11A, RAB3IP, the exocyst complex, PARD3, PRKCI, ANXA2, CDC42 and DNMBP promotes transcytosis of PODXL to the apical membrane initiation sites (AMIS), apical surface formation and lumenogenesis. Regulates the compacted morphology of the Golgi. Together with MYO5B and RAB11A participates in epithelial cell polarization. Also involved in membrane trafficking to the cilium and ciliogenesis. Together with MICALL2, may also regulate adherens junction assembly. May play a role in insulin-induced transport to the plasma membrane of the glucose transporter GLUT4 and therefore play a role in glucose homeostasis. Involved in autophagy. Participates in the export of a subset of neosynthesized proteins through a Rab8-Rab10-Rab11-dependent endososomal export route. Targeted to and stabilized on stressed lysosomes through LRRK2 phosphorylation. Suppresses stress-induced lysosomal enlargement through EHBP1 and EHNP1L1 effector proteins. The polypeptide is Ras-related protein Rab-8A (RAB8A) (Gallus gallus (Chicken)).